A 679-amino-acid polypeptide reads, in one-letter code: Glycine--tRNA ligase beta subunit (679 aa).

It belongs to the class-II aminoacyl-tRNA synthetase family. Tetramer of two alpha and two beta subunits.

The protein localises to the cytoplasm. It catalyses the reaction tRNA(Gly) + glycine + ATP = glycyl-tRNA(Gly) + AMP + diphosphate. This is Glycine--tRNA ligase beta subunit from Streptococcus pyogenes serotype M2 (strain MGAS10270).